Here is a 499-residue protein sequence, read N- to C-terminus: Bifunctional purine biosynthesis protein PurH (499 aa).

Positions 1 to 144 constitute an MGS-like domain; sequence MIKRALISVF…KNFKDVVVLT (144 aa).

It belongs to the PurH family.

The catalysed reaction is (6R)-10-formyltetrahydrofolate + 5-amino-1-(5-phospho-beta-D-ribosyl)imidazole-4-carboxamide = 5-formamido-1-(5-phospho-D-ribosyl)imidazole-4-carboxamide + (6S)-5,6,7,8-tetrahydrofolate. It catalyses the reaction IMP + H2O = 5-formamido-1-(5-phospho-D-ribosyl)imidazole-4-carboxamide. Its pathway is purine metabolism; IMP biosynthesis via de novo pathway; 5-formamido-1-(5-phospho-D-ribosyl)imidazole-4-carboxamide from 5-amino-1-(5-phospho-D-ribosyl)imidazole-4-carboxamide (10-formyl THF route): step 1/1. It functions in the pathway purine metabolism; IMP biosynthesis via de novo pathway; IMP from 5-formamido-1-(5-phospho-D-ribosyl)imidazole-4-carboxamide: step 1/1. This Clostridium botulinum (strain Kyoto / Type A2) protein is Bifunctional purine biosynthesis protein PurH.